The following is a 177-amino-acid chain: Isopentenyl-diphosphate Delta-isomerase (177 aa).

Residues histidine 22 and histidine 28 each coordinate Mn(2+). In terms of domain architecture, Nudix hydrolase spans 26 to 160 (LRHMAISVFV…PERFTPWLRI (135 aa)). The active site involves cysteine 62. Histidine 64 provides a ligand contact to Mn(2+). Glutamate 82 is a binding site for Mg(2+). 2 residues coordinate Mn(2+): glutamate 108 and glutamate 110. Glutamate 110 is an active-site residue.

It belongs to the IPP isomerase type 1 family. It depends on Mg(2+) as a cofactor. Requires Mn(2+) as cofactor.

Its subcellular location is the cytoplasm. It catalyses the reaction isopentenyl diphosphate = dimethylallyl diphosphate. The protein operates within isoprenoid biosynthesis; dimethylallyl diphosphate biosynthesis; dimethylallyl diphosphate from isopentenyl diphosphate: step 1/1. It participates in porphyrin-containing compound metabolism; chlorophyll biosynthesis. Functionally, catalyzes the 1,3-allylic rearrangement of the homoallylic substrate isopentenyl (IPP) to its highly electrophilic allylic isomer, dimethylallyl diphosphate (DMAPP). This is Isopentenyl-diphosphate Delta-isomerase from Cereibacter sphaeroides (strain ATCC 17029 / ATH 2.4.9) (Rhodobacter sphaeroides).